The sequence spans 428 residues: Trigger factor (428 aa).

The 86-residue stretch at 163-248 folds into the PPIase FKBP-type domain; the sequence is GDTAIIDFEG…INDVKVKELS (86 aa).

It belongs to the FKBP-type PPIase family. Tig subfamily.

Its subcellular location is the cytoplasm. The catalysed reaction is [protein]-peptidylproline (omega=180) = [protein]-peptidylproline (omega=0). Involved in protein export. Acts as a chaperone by maintaining the newly synthesized protein in an open conformation. Functions as a peptidyl-prolyl cis-trans isomerase. The polypeptide is Trigger factor (Clostridioides difficile (strain 630) (Peptoclostridium difficile)).